We begin with the raw amino-acid sequence, 333 residues long: Phenylalanine--tRNA ligase alpha subunit (333 aa).

Glutamate 254 is a binding site for Mg(2+).

This sequence belongs to the class-II aminoacyl-tRNA synthetase family. Phe-tRNA synthetase alpha subunit type 1 subfamily. As to quaternary structure, tetramer of two alpha and two beta subunits. Mg(2+) serves as cofactor.

The protein resides in the cytoplasm. It carries out the reaction tRNA(Phe) + L-phenylalanine + ATP = L-phenylalanyl-tRNA(Phe) + AMP + diphosphate + H(+). In Xylella fastidiosa (strain M23), this protein is Phenylalanine--tRNA ligase alpha subunit.